The following is a 578-amino-acid chain: Tetratricopeptide repeat protein ttc-39B (578 aa).

TPR repeat units follow at residues 297 to 330 (AIML…QDVY), 481 to 514 (CLYY…ESSI), and 522 to 554 (PNAT…YKSY).

The polypeptide is Tetratricopeptide repeat protein ttc-39B (Caenorhabditis elegans).